A 489-amino-acid chain; its full sequence is Siroheme synthase (489 aa).

Positions 1–203 are precorrin-2 dehydrogenase /sirohydrochlorin ferrochelatase; the sequence is MDFFPVFMRL…GREDAARETL (203 aa). NAD(+)-binding positions include 22–23 and 43–44; these read PV and PA. The tract at residues 218 to 489 is uroporphyrinogen-III C-methyltransferase; the sequence is GEVFLVGAGP…ARSSTEGAEA (272 aa). Pro-227 contributes to the S-adenosyl-L-methionine binding site. Asp-250 functions as the Proton acceptor in the catalytic mechanism. Lys-272 acts as the Proton donor in catalysis. S-adenosyl-L-methionine-binding positions include 303-305, Ile-308, 333-334, Met-385, and Gly-414; these read GGD and TA.

This sequence in the N-terminal section; belongs to the precorrin-2 dehydrogenase / sirohydrochlorin ferrochelatase family. It in the C-terminal section; belongs to the precorrin methyltransferase family.

The catalysed reaction is uroporphyrinogen III + 2 S-adenosyl-L-methionine = precorrin-2 + 2 S-adenosyl-L-homocysteine + H(+). The enzyme catalyses precorrin-2 + NAD(+) = sirohydrochlorin + NADH + 2 H(+). It carries out the reaction siroheme + 2 H(+) = sirohydrochlorin + Fe(2+). Its pathway is cofactor biosynthesis; adenosylcobalamin biosynthesis; precorrin-2 from uroporphyrinogen III: step 1/1. The protein operates within cofactor biosynthesis; adenosylcobalamin biosynthesis; sirohydrochlorin from precorrin-2: step 1/1. It functions in the pathway porphyrin-containing compound metabolism; siroheme biosynthesis; precorrin-2 from uroporphyrinogen III: step 1/1. It participates in porphyrin-containing compound metabolism; siroheme biosynthesis; siroheme from sirohydrochlorin: step 1/1. Its pathway is porphyrin-containing compound metabolism; siroheme biosynthesis; sirohydrochlorin from precorrin-2: step 1/1. Its function is as follows. Multifunctional enzyme that catalyzes the SAM-dependent methylations of uroporphyrinogen III at position C-2 and C-7 to form precorrin-2 via precorrin-1. Then it catalyzes the NAD-dependent ring dehydrogenation of precorrin-2 to yield sirohydrochlorin. Finally, it catalyzes the ferrochelation of sirohydrochlorin to yield siroheme. The protein is Siroheme synthase of Thioalkalivibrio sulfidiphilus (strain HL-EbGR7).